A 415-amino-acid polypeptide reads, in one-letter code: Gamma-glutamyl phosphate reductase (415 aa).

This sequence belongs to the gamma-glutamyl phosphate reductase family.

It localises to the cytoplasm. It catalyses the reaction L-glutamate 5-semialdehyde + phosphate + NADP(+) = L-glutamyl 5-phosphate + NADPH + H(+). The protein operates within amino-acid biosynthesis; L-proline biosynthesis; L-glutamate 5-semialdehyde from L-glutamate: step 2/2. Catalyzes the NADPH-dependent reduction of L-glutamate 5-phosphate into L-glutamate 5-semialdehyde and phosphate. The product spontaneously undergoes cyclization to form 1-pyrroline-5-carboxylate. In Bacillus cereus (strain ZK / E33L), this protein is Gamma-glutamyl phosphate reductase.